The sequence spans 305 residues: Transmembrane epididymal protein 1 (305 aa).

Residues 4–24 form a helical membrane-spanning segment; it reads FIGHISPGLFLVFYGLYQAII. Asn32 is a glycosylation site (N-linked (GlcNAc...) asparagine). 6 helical membrane-spanning segments follow: residues 51–71, 100–120, 124–144, 159–179, 187–207, and 223–243; these read LWQI…LIVY, LTMF…RSVL, LVLL…LLLV, SLLI…LWAP, IETF…FILF, and IMLV…CMLG. A disordered region spans residues 285–305; it reads EQQDRDDQAPLLSKSSPCDRA.

The protein belongs to the TMEM45 family.

It is found in the membrane. The polypeptide is Transmembrane epididymal protein 1 (Teddm1) (Rattus norvegicus (Rat)).